The chain runs to 275 residues: 2,3,4,5-tetrahydropyridine-2,6-dicarboxylate N-succinyltransferase (275 aa).

Residues R108 and D145 each coordinate substrate.

It belongs to the transferase hexapeptide repeat family. As to quaternary structure, homotrimer.

It is found in the cytoplasm. It carries out the reaction (S)-2,3,4,5-tetrahydrodipicolinate + succinyl-CoA + H2O = (S)-2-succinylamino-6-oxoheptanedioate + CoA. The protein operates within amino-acid biosynthesis; L-lysine biosynthesis via DAP pathway; LL-2,6-diaminopimelate from (S)-tetrahydrodipicolinate (succinylase route): step 1/3. The protein is 2,3,4,5-tetrahydropyridine-2,6-dicarboxylate N-succinyltransferase of Ruegeria pomeroyi (strain ATCC 700808 / DSM 15171 / DSS-3) (Silicibacter pomeroyi).